The chain runs to 397 residues: Cytochrome b (397 aa).

4 helical membrane-spanning segments follow: residues 38–58 (FGSL…FLAM), 82–104 (WLLR…LHIF), 119–139 (VWCL…IGYV), and 185–205 (FFSL…LHLA). Histidine 88 and histidine 102 together coordinate heme b. Residues histidine 189 and histidine 203 each coordinate heme b. Histidine 208 provides a ligand contact to a ubiquinone. The next 4 membrane-spanning stretches (helical) occupy residues 231–251 (FYVK…IWIF), 295–315 (AGGV…PFFK), 327–347 (IYQG…WIGC), and 354–373 (FVTI…AITP).

It belongs to the cytochrome b family. The main subunits of complex b-c1 are: cytochrome b, cytochrome c1 and the Rieske protein. Heme b serves as cofactor.

The protein localises to the mitochondrion inner membrane. In terms of biological role, component of the ubiquinol-cytochrome c reductase complex (complex III or cytochrome b-c1 complex) that is part of the mitochondrial respiratory chain. The b-c1 complex mediates electron transfer from ubiquinol to cytochrome c. Contributes to the generation of a proton gradient across the mitochondrial membrane that is then used for ATP synthesis. In Oryza sativa subsp. indica (Rice), this protein is Cytochrome b (MT-CYB).